The primary structure comprises 291 residues: Beta-lactamase OXY-1 (291 aa).

An N-terminal signal peptide occupies residues 1 to 24 (MLKSSWRKTALMAAAAVPLLLASG). Serine 73 acts as the Acyl-ester intermediate in catalysis. 237–239 (KTG) lines the substrate pocket.

This sequence belongs to the class-A beta-lactamase family.

It catalyses the reaction a beta-lactam + H2O = a substituted beta-amino acid. Hydrolyzes broad-spectrum beta-lactam antibiotics. Active against cephalosporins. This chain is Beta-lactamase OXY-1 (bla), found in Klebsiella oxytoca.